Consider the following 562-residue polypeptide: Glucocorticoid modulatory element-binding protein 1 (562 aa).

The residue at position 2 (A2) is an N-acetylalanine. The SAND domain maps to 72 to 156 (ASSIEGNEDM…RKMMDSGQID (85 aa)). C103 contributes to the Zn(2+) binding site. DNA is bound by residues K129, K133, K136, and R147. Residues H160, C164, and C168 each coordinate Zn(2+). Residues 311 to 355 (LDNRRKQVEQGEEQFLYTLADLERQLEEQKKQAQDPRLKSQTVQN) adopt a coiled-coil conformation. A disordered region spans residues 360–384 (PVSTPKPPKRPRLQRPASTTVLSPS). The span at 375–384 (PASTTVLSPS) shows a compositional bias: polar residues.

Homodimer, and heterodimer of GMEB1 and GMEB2. Interacts with TRIM63. Interacts with the glucocorticoid receptor (NR3C1) and NCOA2/TIF2. May interact with HSP27 and CREB-binding protein (CBP). In terms of tissue distribution, ubiquitous. Low levels were detected in heart, brain, spleen, lung, liver, skeletal muscle, kidney and testis.

It localises to the nucleus. The protein localises to the cytoplasm. Trans-acting factor that binds to glucocorticoid modulatory elements (GME) present in the TAT (tyrosine aminotransferase) promoter and increases sensitivity to low concentrations of glucocorticoids. Also binds to the transferrin receptor promoter. The polypeptide is Glucocorticoid modulatory element-binding protein 1 (Gmeb1) (Mus musculus (Mouse)).